The following is a 195-amino-acid chain: HTH-type transcriptional regulator BetI (195 aa).

One can recognise an HTH tetR-type domain in the interval 8–68 (SIRRRQLIDA…ATMRDITSQL (61 aa)). Residues 31–50 (TIAQIARRAGVSTGIISHYF) constitute a DNA-binding region (H-T-H motif).

It functions in the pathway amine and polyamine biosynthesis; betaine biosynthesis via choline pathway [regulation]. Repressor involved in the biosynthesis of the osmoprotectant glycine betaine. It represses transcription of the choline transporter BetT and the genes of BetAB involved in the synthesis of glycine betaine. The protein is HTH-type transcriptional regulator BetI of Escherichia coli (strain UTI89 / UPEC).